The primary structure comprises 200 residues: NAD(P)H dehydrogenase (quinone) (200 aa).

One can recognise a Flavodoxin-like domain in the interval 4 to 191; that stretch reads ILVLYHSLWG…TIARFQGRHV (188 aa). FMN contacts are provided by residues 10–15 and 79–81; these read SLWGHV and TRF. Trp-12 serves as a coordination point for NAD(+). Trp-99 serves as a coordination point for substrate. Residues 114-120 and His-135 each bind FMN; that span reads STATQHG.

This sequence belongs to the WrbA family. Requires FMN as cofactor.

The catalysed reaction is a quinone + NADH + H(+) = a quinol + NAD(+). It carries out the reaction a quinone + NADPH + H(+) = a quinol + NADP(+). This is NAD(P)H dehydrogenase (quinone) from Acidithiobacillus ferrooxidans (strain ATCC 53993 / BNL-5-31) (Leptospirillum ferrooxidans (ATCC 53993)).